A 1074-amino-acid chain; its full sequence is Phospholipase D1 (1074 aa).

Residues 81-212 (IKAQVLEVER…TEFLDISQLS (132 aa)) enclose the PX domain. The PH domain occupies 219–328 (PKGIEGMIMK…WGGAIEEFIQ (110 aa)). 2 S-palmitoyl cysteine lipidation sites follow: Cys-240 and Cys-241. The PLD phosphodiesterase 1 domain occupies 459–486 (YLWAHHEKLVIIDQSVAFVGGIDLAYGR). Residues 463 to 928 (HHEKLVIIDQ…MLGKRDSEMA (466 aa)) are catalytic. Phosphoserine is present on residues Ser-499, Ser-561, and Ser-629. The 28-residue stretch at 891 to 918 (ELIYVHSKLLIADDNTVIIGSANINDRS) folds into the PLD phosphodiesterase 2 domain.

The protein belongs to the phospholipase D family. Interacts with PIP5K1B. Expressed abundantly in the pancreas and heart and at high levels in brain, placenta, spleen, uterus and small intestine.

Its subcellular location is the cytoplasm. The protein localises to the perinuclear region. The protein resides in the endoplasmic reticulum membrane. It is found in the golgi apparatus membrane. It localises to the late endosome membrane. The enzyme catalyses a 1,2-diacyl-sn-glycero-3-phosphocholine + H2O = a 1,2-diacyl-sn-glycero-3-phosphate + choline + H(+). It carries out the reaction ethanol + a 1,2-diacyl-sn-glycero-3-phosphocholine = 1,2-diacyl-sn-glycero-3-phosphoethanol + choline. It catalyses the reaction 1,2-dihexadecanoyl-sn-glycero-3-phosphocholine + H2O = 1,2-dihexadecanoyl-sn-glycero-3-phosphate + choline + H(+). Stimulated by phosphatidylinositol 4,5-bisphosphate and phosphatidylinositol 3,4,5-trisphosphate, activated by the phosphokinase C-alpha, by the ADP-ribosylation factor-1 (ARF-1), and to a lesser extent by GTP-binding proteins: RHO A, RAC-1 and CDC42. Inhibited by oleate. Its function is as follows. Function as phospholipase selective for phosphatidylcholine. Implicated as a critical step in numerous cellular pathways, including signal transduction, membrane trafficking, and the regulation of mitosis. May be involved in the regulation of perinuclear intravesicular membrane traffic. The polypeptide is Phospholipase D1 (Homo sapiens (Human)).